A 269-amino-acid polypeptide reads, in one-letter code: MKKIATATIATAGFATIAIASGNQAHASEQDNYGYNPNDPTSYSYTYTIDAQGNYHYTWKGNWHPSQLNQDNGYYSYYYYNGYNNYSYNNYNNGYSYNNYSRYNNYSNNNQSYNYNNYNSYNTNSYRTGGLGASYSTSSNNVQVTTTMAPSSNGRSISSGYTSGRNLYTSGQCTYYVFDRVGGKIGSTWGNASNWANAAARAGYTVNNTPKAGAIMQTTQGAYGHVAYVESVNNNGSVRVSEMNYGYGPGVVTSRTISASQAAGYNFIH.

The N-terminal stretch at 1 to 27 (MKKIATATIATAGFATIAIASGNQAHA) is a signal peptide. 7 consecutive repeat copies span residues 83 to 85 (YNN), 88 to 90 (YNN), 91 to 93 (YNN), 97 to 99 (YNN), 103 to 105 (YNN), 106 to 108 (YSN), and 115 to 117 (YNN). Residues 83–115 (YNNYSYNNYNNGYSYNNYSRYNNYSNNNQSYNY) form a 7 X 3 AA repeats of Y-[NS]-N region. The Peptidase C51 domain maps to 148–269 (MAPSSNGRSI…SQAAGYNFIH (122 aa)).

It is found in the secreted. Not known; immunogenic protein. This Staphylococcus aureus (strain MRSA252) protein is Staphylococcal secretory antigen ssaA2 (ssaA2).